We begin with the raw amino-acid sequence, 201 residues long: MAEKFIKHTGLVVPLDAANVDTDAIIPKQFLQKVTRTGFGAHLFNDWRFLDEKGQQPNPDFVLNFPQYQGASILLARENFGCGSSREHAPWALTDYGFKVVIAPSFADIFYGNSFNNQLLPVKLSDAEVDELFALVKANPGIHFDVDLEAQEVKVGEKTYRFTIDAFRRHCMMNGLDSIGLTLQHDDAIASYEAKQPAFMN.

The protein belongs to the LeuD family. LeuD type 1 subfamily. As to quaternary structure, heterodimer of LeuC and LeuD.

The enzyme catalyses (2R,3S)-3-isopropylmalate = (2S)-2-isopropylmalate. The protein operates within amino-acid biosynthesis; L-leucine biosynthesis; L-leucine from 3-methyl-2-oxobutanoate: step 2/4. Catalyzes the isomerization between 2-isopropylmalate and 3-isopropylmalate, via the formation of 2-isopropylmaleate. This chain is 3-isopropylmalate dehydratase small subunit, found in Escherichia fergusonii (strain ATCC 35469 / DSM 13698 / CCUG 18766 / IAM 14443 / JCM 21226 / LMG 7866 / NBRC 102419 / NCTC 12128 / CDC 0568-73).